The following is a 167-amino-acid chain: Small ribosomal subunit protein uS3m (167 aa).

The transit peptide at Met-1 to Ala-35 directs the protein to the mitochondrion.

This sequence belongs to the universal ribosomal protein uS3 family. In terms of assembly, component of the mitochondrial ribosome small subunit (28S) which comprises a 12S rRNA and about 30 distinct proteins.

It is found in the mitochondrion. The protein is Small ribosomal subunit protein uS3m (Mrps24) of Mus musculus (Mouse).